Here is a 144-residue protein sequence, read N- to C-terminus: MRILVLHGPNLNLLGKREPEIYGTLSLDDINGALEALGAEFESDLGFFQSNSEGALVDAIQQAPENYDGILINPAAYTHTSVALRDALAAIGLPFVEVHLSNIHRREEFRHHSYLAPLALGQICGFGLDSYLLGLRALFNHIKN.

Y22 functions as the Proton acceptor in the catalytic mechanism. Positions 73, 79, and 86 each coordinate substrate. H99 serves as the catalytic Proton donor. Residues 100-101 and R110 each bind substrate; that span reads LS.

Belongs to the type-II 3-dehydroquinase family. Homododecamer.

The catalysed reaction is 3-dehydroquinate = 3-dehydroshikimate + H2O. The protein operates within metabolic intermediate biosynthesis; chorismate biosynthesis; chorismate from D-erythrose 4-phosphate and phosphoenolpyruvate: step 3/7. In terms of biological role, catalyzes a trans-dehydration via an enolate intermediate. The protein is 3-dehydroquinate dehydratase of Trichlorobacter lovleyi (strain ATCC BAA-1151 / DSM 17278 / SZ) (Geobacter lovleyi).